Reading from the N-terminus, the 213-residue chain is uncharacterized protein (213 aa).

Residues G53, E74, and D97 each contribute to the S-adenosyl-L-methionine site.

The protein belongs to the methyltransferase superfamily. YrrT family.

In terms of biological role, could be a S-adenosyl-L-methionine-dependent methyltransferase. This is an uncharacterized protein from Bacillus subtilis (strain 168).